Reading from the N-terminus, the 316-residue chain is 4-hydroxy-3-methylbut-2-enyl diphosphate reductase (316 aa).

A [4Fe-4S] cluster-binding site is contributed by Cys12. His41 and His74 together coordinate (2E)-4-hydroxy-3-methylbut-2-enyl diphosphate. Positions 41 and 74 each coordinate dimethylallyl diphosphate. 2 residues coordinate isopentenyl diphosphate: His41 and His74. [4Fe-4S] cluster is bound at residue Cys96. Position 124 (His124) interacts with (2E)-4-hydroxy-3-methylbut-2-enyl diphosphate. His124 contributes to the dimethylallyl diphosphate binding site. His124 provides a ligand contact to isopentenyl diphosphate. Glu126 acts as the Proton donor in catalysis. (2E)-4-hydroxy-3-methylbut-2-enyl diphosphate is bound at residue Thr169. A [4Fe-4S] cluster-binding site is contributed by Cys199. (2E)-4-hydroxy-3-methylbut-2-enyl diphosphate-binding residues include Ser227, Ser228, Asn229, and Ser271. Dimethylallyl diphosphate-binding residues include Ser227, Ser228, Asn229, and Ser271. Residues Ser227, Ser228, Asn229, and Ser271 each coordinate isopentenyl diphosphate.

It belongs to the IspH family. [4Fe-4S] cluster is required as a cofactor.

It carries out the reaction isopentenyl diphosphate + 2 oxidized [2Fe-2S]-[ferredoxin] + H2O = (2E)-4-hydroxy-3-methylbut-2-enyl diphosphate + 2 reduced [2Fe-2S]-[ferredoxin] + 2 H(+). The catalysed reaction is dimethylallyl diphosphate + 2 oxidized [2Fe-2S]-[ferredoxin] + H2O = (2E)-4-hydroxy-3-methylbut-2-enyl diphosphate + 2 reduced [2Fe-2S]-[ferredoxin] + 2 H(+). The protein operates within isoprenoid biosynthesis; dimethylallyl diphosphate biosynthesis; dimethylallyl diphosphate from (2E)-4-hydroxy-3-methylbutenyl diphosphate: step 1/1. It functions in the pathway isoprenoid biosynthesis; isopentenyl diphosphate biosynthesis via DXP pathway; isopentenyl diphosphate from 1-deoxy-D-xylulose 5-phosphate: step 6/6. Catalyzes the conversion of 1-hydroxy-2-methyl-2-(E)-butenyl 4-diphosphate (HMBPP) into a mixture of isopentenyl diphosphate (IPP) and dimethylallyl diphosphate (DMAPP). Acts in the terminal step of the DOXP/MEP pathway for isoprenoid precursor biosynthesis. In Xanthomonas campestris pv. campestris (strain 8004), this protein is 4-hydroxy-3-methylbut-2-enyl diphosphate reductase.